The sequence spans 93 residues: MDGIKYAVFTDKGIRLLGNNQYTSNVESGSTRTEIKHWVELFFGVKVIAMNSHRLPGKGRRMGPIMGHTMHYRRMIITLQPGYSIPPLRKKRT.

It belongs to the universal ribosomal protein uL23 family. As to quaternary structure, part of the 50S ribosomal subunit.

Its subcellular location is the plastid. It localises to the chloroplast. Binds to 23S rRNA. The sequence is that of Large ribosomal subunit protein uL23cz/uL23cy (rpl23-A) from Platanus occidentalis (Sycamore).